The primary structure comprises 309 residues: MVPVLHSLSTIILIAEFVWGNLSNGLIVLKNCIDWINKKELSTVDQILIVLAISRISLIWETLIIWVKDQLISSITIEELKIIVFSFILSSHFSLWLATALSIFYLFRIPNCYWQIFLYLKWRIKQLIVHMLLGSLVFLVANMIQITITLEERFYQYGGNTSVNSMETEFSILIELMLFNMTMFSIIPFSLALISFLLLIFSLWKHLQKMPLNSRGDRDPSATAHRNALRILVSFLLLYTIYFLSLLISWVAQKNQSELVHIICMITSLVYPSFHSYILILGNYKLKQTSLWVMRQLGCRMKRQNTPTT.

At Met-1–Ser-7 the chain is on the extracellular side. A helical membrane pass occupies residues Leu-8–Val-28. At Leu-29–Gln-46 the chain is on the cytoplasmic side. A helical membrane pass occupies residues Ile-47–Val-67. Residues Lys-68–Ser-86 are Extracellular-facing. Residues Phe-87–Phe-107 form a helical membrane-spanning segment. At Arg-108–Leu-127 the chain is on the cytoplasmic side. A helical membrane pass occupies residues Ile-128 to Ile-148. Residues Thr-149–Met-183 are Extracellular-facing. Residues Asn-160 and Asn-180 are each glycosylated (N-linked (GlcNAc...) asparagine). A helical transmembrane segment spans residues Phe-184–Trp-204. Residues Lys-205–Arg-230 lie on the Cytoplasmic side of the membrane. A helical transmembrane segment spans residues Ile-231–Val-251. Residues Ala-252 to His-261 are Extracellular-facing. Asn-255 carries an N-linked (GlcNAc...) asparagine glycan. Residues Ile-262–Gly-282 form a helical membrane-spanning segment. The Cytoplasmic segment spans residues Asn-283–Thr-309.

The protein belongs to the G-protein coupled receptor T2R family.

Its subcellular location is the membrane. Putative taste receptor which may play a role in the perception of bitterness. This is Taste receptor type 2 member 124 from Mus musculus (Mouse).